Reading from the N-terminus, the 295-residue chain is 4-hydroxy-tetrahydrodipicolinate synthase (295 aa).

T46 contacts pyruvate. Y135 acts as the Proton donor/acceptor in catalysis. The Schiff-base intermediate with substrate role is filled by K164. Position 205 (I205) interacts with pyruvate.

This sequence belongs to the DapA family. In terms of assembly, homotetramer; dimer of dimers.

Its subcellular location is the cytoplasm. The catalysed reaction is L-aspartate 4-semialdehyde + pyruvate = (2S,4S)-4-hydroxy-2,3,4,5-tetrahydrodipicolinate + H2O + H(+). Its pathway is amino-acid biosynthesis; L-lysine biosynthesis via DAP pathway; (S)-tetrahydrodipicolinate from L-aspartate: step 3/4. Its function is as follows. Catalyzes the condensation of (S)-aspartate-beta-semialdehyde [(S)-ASA] and pyruvate to 4-hydroxy-tetrahydrodipicolinate (HTPA). This chain is 4-hydroxy-tetrahydrodipicolinate synthase, found in Aliarcobacter butzleri (strain RM4018) (Arcobacter butzleri).